The chain runs to 759 residues: Nucleolar RNA helicase 2-A (759 aa).

The interval 1–154 (MPVKVYAEEM…KKRKTDTTEI (154 aa)) is disordered. The segment covering 77–86 (ETAEECDGEQ) has biased composition (acidic residues). Positions 179-207 (GDFSKFPLSKETIKNLQAKGVSYLFPIQS) match the Q motif motif. The Helicase ATP-binding domain occupies 210-389 (FHTAYSGKDV…KKYMRKQFEK (180 aa)). 223–230 (ARTGTGKT) provides a ligand contact to ATP. The DEAD box signature appears at 332–335 (DEVD). The region spanning 422-566 (DLVQVYSGSH…VGVPSLLNVA (145 aa)) is the Helicase C-terminal domain. Positions 709–759 (QESERNFDGPRNRGFGGRGRRPFDRRNNSRNSNRGGGGRGRNRNGGFRRGR) are disordered. The span at 710–719 (ESERNFDGPR) shows a compositional bias: basic and acidic residues. Positions 748 to 759 (GRNRNGGFRRGR) are enriched in basic residues.

Belongs to the DEAD box helicase family. DDX21/DDX50 subfamily. Widely expressed. Expressed at higher level in stomach. Expressed at higher level compared to ddx21-b.

It localises to the nucleus. It is found in the nucleolus. The protein resides in the nucleoplasm. The protein localises to the cytoplasm. Its subcellular location is the cytosol. It localises to the mitochondrion. It carries out the reaction ATP + H2O = ADP + phosphate + H(+). RNA helicase that acts as a sensor of the transcriptional status of both RNA polymerase (Pol) I and II: promotes ribosomal RNA (rRNA) processing and transcription from polymerase II (Pol II). Binds various RNAs, such as rRNAs, snoRNAs, 7SK and, at lower extent, mRNAs. In the nucleolus, localizes to rDNA locus, where it directly binds rRNAs and snoRNAs, and promotes rRNA transcription, processing and modification. Required for rRNA 2'-O-methylation, possibly by promoting the recruitment of late-acting snoRNAs SNORD56 and SNORD58 with pre-ribosomal complexes. In the nucleoplasm, binds 7SK RNA and is recruited to the promoters of Pol II-transcribed genes: acts by facilitating the release of P-TEFb from inhibitory 7SK snRNP in a manner that is dependent on its helicase activity, thereby promoting transcription of its target genes. Required to prevent R-loop-associated DNA damage and transcription-associated genomic instability. This Xenopus laevis (African clawed frog) protein is Nucleolar RNA helicase 2-A (ddx21-a).